The primary structure comprises 487 residues: Acetyl-coenzyme A carboxylase carboxyl transferase subunit beta, chloroplastic (487 aa).

In terms of domain architecture, CoA carboxyltransferase N-terminal spans 223-487; it reads LWIQCDNCYG…FCPLNKTEIK (265 aa). 4 residues coordinate Zn(2+): Cys227, Cys230, Cys243, and Cys246. Residues 227-246 form a C4-type zinc finger; sequence CDNCYGLMYKKVKMNVCEQC.

This sequence belongs to the AccD/PCCB family. As to quaternary structure, acetyl-CoA carboxylase is a heterohexamer composed of biotin carboxyl carrier protein, biotin carboxylase and 2 subunits each of ACCase subunit alpha and ACCase plastid-coded subunit beta (accD). Zn(2+) serves as cofactor.

The protein resides in the plastid. It is found in the chloroplast stroma. The enzyme catalyses N(6)-carboxybiotinyl-L-lysyl-[protein] + acetyl-CoA = N(6)-biotinyl-L-lysyl-[protein] + malonyl-CoA. Its pathway is lipid metabolism; malonyl-CoA biosynthesis; malonyl-CoA from acetyl-CoA: step 1/1. In terms of biological role, component of the acetyl coenzyme A carboxylase (ACC) complex. Biotin carboxylase (BC) catalyzes the carboxylation of biotin on its carrier protein (BCCP) and then the CO(2) group is transferred by the transcarboxylase to acetyl-CoA to form malonyl-CoA. This is Acetyl-coenzyme A carboxylase carboxyl transferase subunit beta, chloroplastic from Nasturtium officinale (Watercress).